The chain runs to 232 residues: Ubiquinone biosynthesis O-methyltransferase (232 aa).

Positions 36, 55, 76, and 120 each coordinate S-adenosyl-L-methionine.

Belongs to the methyltransferase superfamily. UbiG/COQ3 family.

It carries out the reaction a 3-demethylubiquinol + S-adenosyl-L-methionine = a ubiquinol + S-adenosyl-L-homocysteine + H(+). The catalysed reaction is a 3-(all-trans-polyprenyl)benzene-1,2-diol + S-adenosyl-L-methionine = a 2-methoxy-6-(all-trans-polyprenyl)phenol + S-adenosyl-L-homocysteine + H(+). It participates in cofactor biosynthesis; ubiquinone biosynthesis. In terms of biological role, O-methyltransferase that catalyzes the 2 O-methylation steps in the ubiquinone biosynthetic pathway. The chain is Ubiquinone biosynthesis O-methyltransferase from Pseudomonas putida (strain ATCC 700007 / DSM 6899 / JCM 31910 / BCRC 17059 / LMG 24140 / F1).